A 315-amino-acid polypeptide reads, in one-letter code: L-lactate dehydrogenase (315 aa).

NAD(+) contacts are provided by residues V14, D35, Y67, and 81-82 (GV). Residues Q84, R91, and 123–126 (NPVD) each bind substrate. NAD(+) contacts are provided by residues 121-123 (ASN) and S146. 151–154 (DSAR) contributes to the substrate binding site. The active-site Proton acceptor is H178. A Phosphotyrosine modification is found at Y219. T228 is a substrate binding site.

This sequence belongs to the LDH/MDH superfamily. LDH family. As to quaternary structure, homotetramer.

The protein resides in the cytoplasm. It carries out the reaction (S)-lactate + NAD(+) = pyruvate + NADH + H(+). The protein operates within fermentation; pyruvate fermentation to lactate; (S)-lactate from pyruvate: step 1/1. In terms of biological role, catalyzes the conversion of lactate to pyruvate. The sequence is that of L-lactate dehydrogenase from Malacoplasma penetrans (strain HF-2) (Mycoplasma penetrans).